The primary structure comprises 150 residues: Probable histone H2A.5 (150 aa).

Residues methionine 1–arginine 12 are compositionally biased toward low complexity. 2 disordered regions span residues methionine 1 to lysine 28 and lysine 130 to alanine 150. Positions serine 131–alanine 150 are enriched in polar residues. Phosphoserine is present on serine 146. Residues serine 146–lysine 149 carry the SPKK motif motif.

It belongs to the histone H2A family. The nucleosome is a histone octamer containing two molecules each of H2A, H2B, H3 and H4 assembled in one H3-H4 heterotetramer and two H2A-H2B heterodimers. The octamer wraps approximately 147 bp of DNA. Post-translationally, not ubiquitinated.

Its subcellular location is the nucleus. It localises to the chromosome. Its function is as follows. Core component of nucleosome. Nucleosomes wrap and compact DNA into chromatin, limiting DNA accessibility to the cellular machineries which require DNA as a template. Histones thereby play a central role in transcription regulation, DNA repair, DNA replication and chromosomal stability. DNA accessibility is regulated via a complex set of post-translational modifications of histones, also called histone code, and nucleosome remodeling. In Arabidopsis thaliana (Mouse-ear cress), this protein is Probable histone H2A.5.